A 124-amino-acid chain; its full sequence is Small ribosomal subunit protein uS12 (124 aa).

A 3-methylthioaspartic acid modification is found at aspartate 89.

This sequence belongs to the universal ribosomal protein uS12 family. As to quaternary structure, part of the 30S ribosomal subunit. Contacts proteins S8 and S17. May interact with IF1 in the 30S initiation complex.

In terms of biological role, with S4 and S5 plays an important role in translational accuracy. Interacts with and stabilizes bases of the 16S rRNA that are involved in tRNA selection in the A site and with the mRNA backbone. Located at the interface of the 30S and 50S subunits, it traverses the body of the 30S subunit contacting proteins on the other side and probably holding the rRNA structure together. The combined cluster of proteins S8, S12 and S17 appears to hold together the shoulder and platform of the 30S subunit. In Yersinia enterocolitica serotype O:8 / biotype 1B (strain NCTC 13174 / 8081), this protein is Small ribosomal subunit protein uS12.